The following is a 241-amino-acid chain: Carboxy-S-adenosyl-L-methionine synthase (241 aa).

S-adenosyl-L-methionine contacts are provided by residues Tyr38, 63-65 (GCS), 88-89 (DN), 116-117 (DI), Asn131, and Arg198.

It belongs to the class I-like SAM-binding methyltransferase superfamily. Cx-SAM synthase family. As to quaternary structure, homodimer.

It carries out the reaction prephenate + S-adenosyl-L-methionine = carboxy-S-adenosyl-L-methionine + 3-phenylpyruvate + H2O. Functionally, catalyzes the conversion of S-adenosyl-L-methionine (SAM) to carboxy-S-adenosyl-L-methionine (Cx-SAM). The chain is Carboxy-S-adenosyl-L-methionine synthase from Haemophilus influenzae (strain PittEE).